A 484-amino-acid polypeptide reads, in one-letter code: N-succinylglutamate 5-semialdehyde dehydrogenase (484 aa).

221 to 226 (GSAAAG) serves as a coordination point for NAD(+). Residues E244 and C278 contribute to the active site.

It belongs to the aldehyde dehydrogenase family. AstD subfamily.

The enzyme catalyses N-succinyl-L-glutamate 5-semialdehyde + NAD(+) + H2O = N-succinyl-L-glutamate + NADH + 2 H(+). The protein operates within amino-acid degradation; L-arginine degradation via AST pathway; L-glutamate and succinate from L-arginine: step 4/5. Functionally, catalyzes the NAD-dependent reduction of succinylglutamate semialdehyde into succinylglutamate. In Caulobacter sp. (strain K31), this protein is N-succinylglutamate 5-semialdehyde dehydrogenase.